Here is a 214-residue protein sequence, read N- to C-terminus: 3,4-dihydroxy-2-butanone 4-phosphate synthase (214 aa).

D-ribulose 5-phosphate is bound by residues 37 to 38 (RE), D42, 150 to 154 (RRGHT), and E174. Position 38 (E38) interacts with Mg(2+). H153 contributes to the Mg(2+) binding site.

It belongs to the DHBP synthase family. As to quaternary structure, homodimer. The cofactor is Mg(2+). Requires Mn(2+) as cofactor.

It carries out the reaction D-ribulose 5-phosphate = (2S)-2-hydroxy-3-oxobutyl phosphate + formate + H(+). The protein operates within cofactor biosynthesis; riboflavin biosynthesis; 2-hydroxy-3-oxobutyl phosphate from D-ribulose 5-phosphate: step 1/1. Functionally, catalyzes the conversion of D-ribulose 5-phosphate to formate and 3,4-dihydroxy-2-butanone 4-phosphate. This is 3,4-dihydroxy-2-butanone 4-phosphate synthase from Histophilus somni (strain 2336) (Haemophilus somnus).